A 170-amino-acid chain; its full sequence is CDP-archaeol synthase (170 aa).

5 consecutive transmembrane segments (helical) span residues 6–26 (LLWAFWYILPAYFANASPVLV), 53–73 (GLIGGVAIGTAVGALQYFITP), 83–103 (LLLAFLLSFGALFGDLVGSFF), 114–134 (PAIGLDQLGFLISALAFAYPV), and 140–160 (GQIIFLLVVSPFVHWGANYFA).

It belongs to the CDP-archaeol synthase family. Mg(2+) is required as a cofactor.

The protein resides in the cell membrane. The catalysed reaction is 2,3-bis-O-(geranylgeranyl)-sn-glycerol 1-phosphate + CTP + H(+) = CDP-2,3-bis-O-(geranylgeranyl)-sn-glycerol + diphosphate. The protein operates within membrane lipid metabolism; glycerophospholipid metabolism. Its function is as follows. Catalyzes the formation of CDP-2,3-bis-(O-geranylgeranyl)-sn-glycerol (CDP-archaeol) from 2,3-bis-(O-geranylgeranyl)-sn-glycerol 1-phosphate (DGGGP) and CTP. This reaction is the third ether-bond-formation step in the biosynthesis of archaeal membrane lipids. The protein is CDP-archaeol synthase of Thermococcus onnurineus (strain NA1).